The sequence spans 2285 residues: MAAQVAPAAASSLGNPPPPPPSELKKAEQQQREEAGGEAAAAAAAERGEMKAAAGQESEGPAVGPPQPLGKELQDGAESNGGGGGGGAGSGGGPGAEPDLKNSNGNAGPRPALNNNLTEPPGGGGGGSSDGVGAPPHSAAAALPPPAYGFGQPYGRSPSAVAAAAAAVFHQQHGGQQSPGLAALQSGGGGGLEPYAGPQQNSHDHGFPNHQYNSYYPNRSAYPPPAPAYALSSPRGGTPGSGAAAAAGSKPPPSSSASASSSSSSFAQQRFGAMGGGGPSAAGGGTPQPTATPTLNQLLTSPSSARGYQGYPGGDYSGGPQDGGAGKGPADMASQCWGAAAAAAAAAAASGGAQQRSHHAPMSPGSSGGGGQPLARTPQPSSPMDQMGKMRPQPYGGTNPYSQQQGPPSGPQQGHGYPGQPYGSQTPQRYPMTMQGRAQSAMGGLSYTQQIPPYGQQGPSGYGQQGQTPYYNQQSPHPQQQQPPYSQQPPSQTPHAQPSYQQQPQSQPPQLQSSQPPYSQQPSQPPHQQSPAPYPSQQSTTQQHPQSQPPYSQPQAQSPYQQQQPQQPAPSTLSQQAAYPQPQSQQSQQTAYSQQRFPPPQELSQDSFGSQASSAPSMTSSKGGQEDMNLSLQSRPSSLPDLSGSIDDLPMGTEGALSPGVSTSGISSSQGEQSNPAQSPFSPHTSPHLPGIRGPSPSPVGSPASVAQSRSGPLSPAAVPGNQMPPRPPSGQSDSIMHPSMNQSSIAQDRGYMQRNPQMPQYSSPQPGSALSPRQPSGGQIHTGMGSYQQNSMGSYGPQGGQYGPQGGYPRQPNYNALPNANYPSAGMAGGINPMGAGGQMHGQPGIPPYGTLPPGRMSHASMGNRPYGPNMANMPPQVGSGMCPPPGGMNRKTQETAVAMHVAANSIQNRPPGYPNMNQGGMMGTGPPYGQGINSMAGMINPQGPPYSMGGTMANNSAGMAASPEMMGLGDVKLTPATKMNNKADGTPKTESKSKKSSSSTTTNEKITKLYELGGEPERKMWVDRYLAFTEEKAMGMTNLPAVGRKPLDLYRLYVSVKEIGGLTQVNKNKKWRELATNLNVGTSSSAASSLKKQYIQCLYAFECKIERGEDPPPDIFAAADSKKSQPKIQPPSPAGSGSMQGPQTPQSTSSSMAEGGDLKPPTPASTPHSQIPPLPGMSRSNSVGIQDAFNDGSDSTFQKRNSMTPNPGYQPSMNTSDMMGRMSYEPNKDPYGSMRKAPGSDPFMSSGQGPNGGMGDPYSRAAGPGLGNVAMGPRQHYPYGGPYDRVRTEPGIGPEGNMSTGAPQPNLMPSNPDSGMYSPSRYPPQQQQQQQQRHDSYGNQFSTQGTPSGSPFPSQQTTMYQQQQQNYKRPMDGTYGPPAKRHEGEMYSVPYSTGQGQPQQQQLPPAQPQPASQQQAAQPSPQQDVYNQYGNAYPATATAATERRPAGGPQNQFPFQFGRDRVSAPPGTNAQQNMPPQMMGGPIQASAEVAQQGTMWQGRNDMTYNYANRQSTGSAPQGPAYHGVNRTDEMLHTDQRANHEGSWPSHGTRQPPYGPSAPVPPMTRPPPSNYQPPPSMQNHIPQVSSPAPLPRPMENRTSPSKSPFLHSGMKMQKAGPPVPASHIAPAPVQPPMIRRDITFPPGSVEATQPVLKQRRRLTMKDIGTPEAWRVMMSLKSGLLAESTWALDTINILLYDDNSIMTFNLSQLPGLLELLVEYFRRCLIEIFGILKEYEVGDPGQRTLLDPGRFSKVSSPAPMEGGEEEEELLGPKLEEEEEEEVVENDEEIAFSGKDKPASENSEEKLISKFDKLPVKIVQKNDPFVVDCSDKLGRVQEFDSGLLHWRIGGGDTTEHIQTHFESKTELLPSRPHAPCPPAPRKHVTTAEGTPGTTDQEGPPPDGPPEKRITATMDDMLSTRSSTLTEDGAKSSEAIKESSKFPFGISPAQSHRNIKILEDEPHSKDETPLCTLLDWQDSLAKRCVCVSNTIRSLSFVPGNDFEMSKHPGLLLILGKLILLHHKHPERKQAPLTYEKEEEQDQGVSCNKVEWWWDCLEMLRENTLVTLANISGQLDLSPYPESICLPVLDGLLHWAVCPSAEAQDPFSTLGPNAVLSPQRLVLETLSKLSIQDNNVDLILATPPFSRLEKLYSTMVRFLSDRKNPVCREMAVVLLANLAQGDSLAARAIAVQKGSIGNLLGFLEDSLAATQFQQSQASLLHMQNPPFEPTSVDMMRRAARALLALAKVDENHSEFTLYESRLLDISVSPLMNSLVSQVICDVLFLIGQS.

The span at 1–14 shows a compositional bias: low complexity; sequence MAAQVAPAAASSLG. Disordered regions lie at residues 1 to 820 and 978 to 1005; these read MAAQ…ALPN and ATKM…TTTN. At Ala-2 the chain carries N-acetylalanine. Basic and acidic residues predominate over residues 23–35; the sequence is ELKKAEQQQREEA. 2 positions are modified to phosphoserine: Ser-58 and Ser-79. Composition is skewed to gly residues over residues 79–95 and 121–130; these read SNGG…GGPG and PGGGGGGSSD. Composition is skewed to low complexity over residues 131 to 142, 212 to 221, and 228 to 265; these read GVGAPPHSAAAA, YNSYYPNRSA, and AYAL…SSSS. Position 233 is a phosphoserine (Ser-233). Residues 273 to 286 are compositionally biased toward gly residues; it reads AMGGGGPSAAGGGT. Thr-286 is modified (phosphothreonine). The LXXLL signature appears at 295–299; that stretch reads LNQLL. Polar residues predominate over residues 295-306; it reads LNQLLTSPSSAR. Ser-301 bears the Phosphoserine mark. Residues 310–327 are compositionally biased toward gly residues; the sequence is GYPGGDYSGGPQDGGAGK. Residues 338 to 353 are compositionally biased toward low complexity; that stretch reads GAAAAAAAAAAASGGA. Phosphoserine occurs at positions 363 and 382. Residues 400 to 425 show a composition bias toward low complexity; the sequence is PYSQQQGPPSGPQQGHGYPGQPYGSQ. Arg-429 carries the post-translational modification Asymmetric dimethylarginine. Composition is skewed to low complexity over residues 447–457, 465–546, and 553–595; these read YTQQIPPYGQQ, QGQT…QHPQ, and QPQA…YSQQ. The residue at position 604 (Ser-604) is a Phosphoserine. Over residues 610-621 the composition is skewed to low complexity; that stretch reads SQASSAPSMTSS. A compositionally biased stretch (polar residues) spans 628-637; sequence MNLSLQSRPS. Low complexity predominate over residues 658 to 674; sequence SPGVSTSGISSSQGEQS. A compositionally biased stretch (polar residues) spans 675 to 685; the sequence is NPAQSPFSPHT. 6 positions are modified to phosphoserine: Ser-696, Ser-698, Ser-702, Ser-730, Ser-764, and Ser-772. 2 stretches are compositionally biased toward polar residues: residues 730 to 747 and 755 to 793; these read SGQS…SSIA and RNPQ…QNSM. Over residues 797–807 the composition is skewed to gly residues; it reads GPQGGQYGPQG. The segment covering 808-820 has biased composition (low complexity); that stretch reads GYPRQPNYNALPN. An ARID domain is found at 1017–1108; that stretch reads EPERKMWVDR…CLYAFECKIE (92 aa). Disordered stretches follow at residues 1113 to 1483 and 1539 to 1603; these read PPPD…MMGG and ANHE…SPSK. Residues 1141–1154 show a composition bias toward low complexity; sequence MQGPQTPQSTSSSM. Pro residues predominate over residues 1162 to 1177; it reads PPTPASTPHSQIPPLP. A Phosphoserine modification is found at Ser-1184. A compositionally biased stretch (polar residues) spans 1194–1219; sequence GSDSTFQKRNSMTPNPGYQPSMNTSD. Phosphoserine is present on Ser-1235. Residue Arg-1276 is modified to Omega-N-methylarginine. Polar residues-rich tracts occupy residues 1299 to 1315 and 1339 to 1356; these read NMST…SNPD and YGNQ…PFPS. Over residues 1357-1367 the composition is skewed to low complexity; it reads QQTTMYQQQQQ. The short motif at 1368–1387 is the Nuclear localization signal element; the sequence is NYKRPMDGTYGPPAKRHEGE. Low complexity predominate over residues 1396-1425; that stretch reads GQGQPQQQQLPPAQPQPASQQQAAQPSPQQ. The span at 1468–1477 shows a compositional bias: polar residues; the sequence is PGTNAQQNMP. Residues 1554–1577 show a composition bias toward pro residues; it reads PYGPSAPVPPMTRPPPSNYQPPPS. Residue Ser-1604 is modified to Phosphoserine. Residue Lys-1612 is modified to N6-acetyllysine. The LXXLL motif lies at 1709–1713; that stretch reads LPGLL. Disordered stretches follow at residues 1747–1774 and 1859–1907; these read PGRF…PKLE and FESK…EKRI. A phosphoserine mark is found at Ser-1751 and Ser-1754. Acidic residues predominate over residues 1761 to 1774; the sequence is GGEEEEELLGPKLE. The segment covering 1886 to 1895 has biased composition (low complexity); the sequence is EGTPGTTDQE. Thr-1888 bears the Phosphothreonine mark. At Lys-1905 the chain carries N6-acetyllysine. Residues Ser-1929 and Ser-1944 each carry the phosphoserine modification. 2 short sequence motifs (LXXLL) span residues 1967 to 1971 and 2085 to 2089; these read LCTLL and LDGLL.

In terms of assembly, component of SWI/SNF chromatin remodeling complexes, in some of which it can be mutually exclusive with ARID1B/BAF250B. The canonical complex contains a catalytic subunit (either SMARCA4/BRG1/BAF190A or SMARCA2/BRM/BAF190B) and at least SMARCE1, ACTL6A/BAF53, SMARCC1/BAF155, SMARCC2/BAF170, and SMARCB1/SNF5/BAF47. Other subunits specific to each of the complexes may also be present permitting several possible combinations developmentally and tissue specific. Component of the BAF (SWI/SNF-A) complex, which includes at least actin (ACTB), ARID1A/BAF250A, ARID1B/BAF250B, SMARCA2/BRM, SMARCA4/BRG1/BAF190A, ACTL6A/BAF53, ACTL6B/BAF53B, SMARCE1/BAF57, SMARCC1/BAF155, SMARCC2/BAF170, SMARCB1/SNF5/INI1, and one or more SMARCD1/BAF60A, SMARCD2/BAF60B, or SMARCD3/BAF60C. In muscle cells, the BAF complex also contains DPF3. Component of neural progenitors-specific chromatin remodeling complex (npBAF complex) composed of at least, ARID1A/BAF250A or ARID1B/BAF250B, SMARCD1/BAF60A, SMARCD3/BAF60C, SMARCA2/BRM/BAF190B, SMARCA4/BRG1/BAF190A, SMARCB1/BAF47, SMARCC1/BAF155, SMARCE1/BAF57, SMARCC2/BAF170, PHF10/BAF45A, ACTL6A/BAF53A and actin. Component of neuron-specific chromatin remodeling complex (nBAF complex) composed of at least, ARID1A/BAF250A or ARID1B/BAF250B, SMARCD1/BAF60A, SMARCD3/BAF60C, SMARCA2/BRM/BAF190B, SMARCA4/BRG1/BAF190A, SMARCB1/BAF47, SMARCC1/BAF155, SMARCE1/BAF57, SMARCC2/BAF170, DPF1/BAF45B, DPF3/BAF45C, ACTL6B/BAF53B and actin. Component of a SWI/SNF-like EBAFa complex, at least composed of SMARCA4/BRG1/BAF190A, SMARCB1/BAF47/SNF5, ACTL6A/BAF53A, SMARCE1/BAF57, SMARCD1/BAF60A, SMARCC1/BAF155, SMARCC2/BAF170, BAF250A and MLLT1/ENL. Interacts through its C-terminus with SMARCA2/BRM/BAF190B and SMARCA4/BRG1/BAF190A. Interacts with SMARCC1/BAF155. Interacts with FOS, FOSB isoform 1 and 2, FOSL1 and FOSL2. As to expression, highly expressed in spleen, thymus, prostate, testis, ovary, small intestine, colon, and PBL, and at a much lower level in heart, brain, placenta, lung, liver, skeletal muscle, kidney, and pancreas.

It localises to the nucleus. Functionally, involved in transcriptional activation and repression of select genes by chromatin remodeling (alteration of DNA-nucleosome topology). Component of SWI/SNF chromatin remodeling complexes that carry out key enzymatic activities, changing chromatin structure by altering DNA-histone contacts within a nucleosome in an ATP-dependent manner. Binds DNA non-specifically. Belongs to the neural progenitors-specific chromatin remodeling complex (npBAF complex) and the neuron-specific chromatin remodeling complex (nBAF complex). During neural development a switch from a stem/progenitor to a postmitotic chromatin remodeling mechanism occurs as neurons exit the cell cycle and become committed to their adult state. The transition from proliferating neural stem/progenitor cells to postmitotic neurons requires a switch in subunit composition of the npBAF and nBAF complexes. As neural progenitors exit mitosis and differentiate into neurons, npBAF complexes which contain ACTL6A/BAF53A and PHF10/BAF45A, are exchanged for homologous alternative ACTL6B/BAF53B and DPF1/BAF45B or DPF3/BAF45C subunits in neuron-specific complexes (nBAF). The npBAF complex is essential for the self-renewal/proliferative capacity of the multipotent neural stem cells. The nBAF complex along with CREST plays a role regulating the activity of genes essential for dendrite growth. The chain is AT-rich interactive domain-containing protein 1A (ARID1A) from Homo sapiens (Human).